The sequence spans 188 residues: Elongation factor P (188 aa).

It belongs to the elongation factor P family.

The protein localises to the cytoplasm. The protein operates within protein biosynthesis; polypeptide chain elongation. Functionally, involved in peptide bond synthesis. Stimulates efficient translation and peptide-bond synthesis on native or reconstituted 70S ribosomes in vitro. Probably functions indirectly by altering the affinity of the ribosome for aminoacyl-tRNA, thus increasing their reactivity as acceptors for peptidyl transferase. The polypeptide is Elongation factor P (Chlorobium limicola (strain DSM 245 / NBRC 103803 / 6330)).